The following is a 181-amino-acid chain: Adenine phosphoribosyltransferase (181 aa).

The protein belongs to the purine/pyrimidine phosphoribosyltransferase family. Homodimer.

The protein resides in the cytoplasm. The enzyme catalyses AMP + diphosphate = 5-phospho-alpha-D-ribose 1-diphosphate + adenine. It functions in the pathway purine metabolism; AMP biosynthesis via salvage pathway; AMP from adenine: step 1/1. Functionally, catalyzes a salvage reaction resulting in the formation of AMP, that is energically less costly than de novo synthesis. The polypeptide is Adenine phosphoribosyltransferase (Psychromonas ingrahamii (strain DSM 17664 / CCUG 51855 / 37)).